The primary structure comprises 367 residues: Isocitrate dehydrogenase [NAD] regulatory subunit 2, mitochondrial (367 aa).

Residues Met1–Ser25 constitute a mitochondrion transit peptide.

This sequence belongs to the isocitrate and isopropylmalate dehydrogenases family. As to quaternary structure, heterooligomer of catalytic and regulatory subunits. Ubiquitous. Predominantly expressed in roots, stems and leaves.

The protein resides in the mitochondrion. In terms of biological role, performs an essential role in the oxidative function of the citric acid cycle. This is Isocitrate dehydrogenase [NAD] regulatory subunit 2, mitochondrial (IDH2) from Arabidopsis thaliana (Mouse-ear cress).